Here is a 482-residue protein sequence, read N- to C-terminus: BTB/POZ domain and ankyrin repeat-containing protein NOOT1 (482 aa).

In terms of domain architecture, BTB spans 25-107 (SDVVFSVEGR…LYSGQVSIVP (83 aa)). A C2HC NPR-type zinc finger spans residues 113–127 (RPNCGDRGCWHTHCT). C116, C121, H123, and C126 together coordinate Zn(2+). 4 ANK repeats span residues 249 to 278 (QKIR…LNLD), 279 to 308 (EALA…DVNF), 313 to 342 (TGKT…DPNV), and 346 to 380 (DGVT…KLRL). Positions 395–434 (EEGNNNNSNNNNNATASSATNMYPHHNMNEDHHHSHNNNN) are disordered. The segment covering 398 to 415 (NNNNSNNNNNATASSATN) has biased composition (low complexity).

This sequence belongs to the plant 'ANKYRIN-BTB/POZ' family. 'NOOT-BOP-COCH-like' (NBCL) subfamily. In terms of assembly, homodimer. Expressed in the shoot apical meristem (SAM) at the base of the developing leaf where stipules are formed. Associated with functional and vestigial abscission zones (AZs), including pulvini.

The protein localises to the nucleus. Its subcellular location is the cytoplasm. It localises to the cell membrane. Its pathway is protein modification; protein ubiquitination. In terms of biological role, may act as a substrate-specific adapter of an E3 ubiquitin-protein ligase complex (CUL3-RBX1-BTB) which mediates the ubiquitination and subsequent proteasomal degradation of target proteins. Transcriptional co-regulator involved in the promotion of leaf and floral meristem fate and determinacy. Promotes normal stipule growth and development. Required for the abscission of senescent organs, probably by regulating the cell wall disorganization in abscission zones (AZs, e.g. pulvini at the base of leaves). Involved in the coordination of the symbiotic nodule developmental program. Promotes the formation of root nodules by interacting directly with APP1 to modulate the expression of the nuclear transcription factor Y subunit (NF-YA1), a key nodulin. Necessary for the robust maintenance of nodule identity throughout the nodule developmental program. Involved in the regulation of indeterminate nodule identity in association with NOOT2. This is BTB/POZ domain and ankyrin repeat-containing protein NOOT1 from Medicago truncatula (Barrel medic).